An 830-amino-acid chain; its full sequence is ATP-dependent DNA helicase chl-1 (830 aa).

The region spanning 1–403 is the Helicase ATP-binding domain; that stretch reads MDEFSFPFQP…HNLLYMKQLE (403 aa). 35–42 lines the ATP pocket; the sequence is SPTGTGKS. Composition is skewed to basic and acidic residues over residues 124–140 and 157–168; these read GMVE…RDTD and NDEKSEKQRDSD. Residues 124 to 173 form a disordered region; sequence GMVEVSRKRKAPARDTDQFLEPQDEAAPSEEYNNDEKSEKQRDSDFFDDV. [4Fe-4S] cluster-binding residues include Cys-222, Cys-240, Cys-272, and Cys-308. A DEAH box motif is present at residues 351–354; that stretch reads DEAH.

It belongs to the DEAD box helicase family. DEAH subfamily. DDX11/CHL1 sub-subfamily. The cofactor is [4Fe-4S] cluster.

Its subcellular location is the nucleus. It carries out the reaction Couples ATP hydrolysis with the unwinding of duplex DNA at the replication fork by translocating in the 5'-3' direction. This creates two antiparallel DNA single strands (ssDNA). The leading ssDNA polymer is the template for DNA polymerase III holoenzyme which synthesizes a continuous strand.. The catalysed reaction is ATP + H2O = ADP + phosphate + H(+). Required for normal cell proliferation and chromosome stability. Plays a role in DNA repair during replication. This Caenorhabditis elegans protein is ATP-dependent DNA helicase chl-1.